We begin with the raw amino-acid sequence, 203 residues long: Anti-sigma-W factor RsiW (203 aa).

Residues 1–86 (MECPKEIVLL…TARLRRFLHR (86 aa)) are Cytoplasmic-facing. Residues H30, C34, and C37 each contribute to the Zn(2+) site. A helical transmembrane segment spans residues 87–103 (HPLLTAASLFLALTLGS). At 104–203 (LASSWGERGA…RFNRALQSIE (100 aa)) the chain is on the extracellular side.

It belongs to the zinc-associated anti-sigma factor (ZAS) superfamily. Anti-sigma-W factor family. Zn(2+) is required as a cofactor. Post-translationally, is processed by three successive proteolytic events. First, the extracellular region of RsiW is cleaved by PrsW (Site-1 cleavage) in response to cell envelope stresses. Next, it undergoes cleavage at an intramembrane site (Site-2 cleavage) mediated by RasP. This cleavage uncovers a cryptic proteolytic tag with conserved alanine residues in the transmembrane segment, that is recognized mainly by the ClpXP protease, which completely degrades the protein in the cytoplasm and leads to the induction of the sigma-W-controlled genes.

The protein resides in the membrane. Is the anti-sigma factor for SigW. The presence of RsiW leads to the inactivation of SigW, and its proteolytic destruction to sigma-W activation. This Geobacillus kaustophilus (strain HTA426) protein is Anti-sigma-W factor RsiW (rsiW).